A 330-amino-acid chain; its full sequence is Deoxyhypusine hydroxylase (330 aa).

HEAT-like PBS-type repeat units lie at residues 57-83 (LKHE…VLRN), 90-116 (VRHE…YLSD), and 199-225 (ERYR…GFSG). Residues histidine 59, glutamate 60, histidine 92, and glutamate 93 each contribute to the Fe cation site. Fe cation is bound by residues histidine 232, glutamate 233, histidine 265, and glutamate 266. The HEAT-like PBS-type 4 repeat unit spans residues 263 to 289 (VRHEAAEALGGIATPEVLPPLKEWVAR).

The protein belongs to the deoxyhypusine hydroxylase family. The cofactor is Fe(2+).

The protein resides in the cytoplasm. The protein localises to the nucleus. The catalysed reaction is [eIF5A protein]-deoxyhypusine + AH2 + O2 = [eIF5A protein]-hypusine + A + H2O. It functions in the pathway protein modification; eIF5A hypusination. Functionally, catalyzes the hydroxylation of the N(6)-(4-aminobutyl)-L-lysine intermediate to form hypusine, an essential post-translational modification only found in mature eIF-5A factor. The polypeptide is Deoxyhypusine hydroxylase (Lentinula edodes (Shiitake mushroom)).